A 116-amino-acid chain; its full sequence is U3-theraphotoxin-Lsp1a (116 aa).

Positions 1–17 (MKLSTFIIMISLAVALA) are cleaved as a signal peptide. The propeptide occupies 18-50 (TWPSEHIEGSDSETKLNVELGPYALADRAEKGK).

The protein belongs to the neurotoxin 25 family. F7 subfamily. In terms of processing, contains 3 disulfide bonds. As to expression, expressed by the venom gland.

Its subcellular location is the secreted. The chain is U3-theraphotoxin-Lsp1a from Lasiodora sp. (strain IBSP 8539) (Brazilian salmon pink birdeater).